Here is a 566-residue protein sequence, read N- to C-terminus: Lamin-1 (566 aa).

Residues 1 to 37 (MSSRKGTRSSRIVTLERSANSSLSNNGGGDDSFGSTL) are disordered. The residue at position 2 (S2) is an N-acetylserine. Positions 13–47 (VTLERSANSSLSNNGGGDDSFGSTLLETSRLQEKD) are head. Positions 45 to 387 (EKDHLTSLNS…ALLEGEEERL (343 aa)) constitute an IF rod domain. The tract at residues 48 to 82 (HLTSLNSRLATYIDKVRQLEQENNRLQVQIRDIEV) is coil 1A. Residues 83-94 (VEKKEKSNLADR) form a linker 1 region. A coil 1B region spans residues 95-228 (FEAEKARLRR…AFALQQHKGE (134 aa)). The interval 229–256 (LEEVRHKRQVDMTTYAKQINDEYQSKLQ) is linker 2. Residues 257–385 (DQIEEMRAQF…YQALLEGEEE (129 aa)) form a coil 2 region. Residues 386-566 (RLNLTQEAPQ…SDPADRCSIM (181 aa)) are tail. Residues 435–550 (RRSKLNKETV…DTVSSITVEF (116 aa)) enclose the LTD domain. The interval 528–566 (GDNPSARLEDSEGDTVSSITVEFSESSDPSDPADRCSIM) is disordered. A compositionally biased stretch (polar residues) spans 541–556 (DTVSSITVEFSESSDP). C563 bears the Cysteine methyl ester mark. A lipid anchor (S-farnesyl cysteine) is attached at C563. Positions 564–566 (SIM) are cleaved as a propeptide — removed in mature form.

It belongs to the intermediate filament family. In terms of assembly, interacts with LEM domain proteins lem-2 and emr-1. May interact with unc-84; this interaction may be required to complete the connection between the nuclear lamina and the cytoskeleton. In terms of tissue distribution, ubiquitous. Expressed in all cells, except in cells undergoing spermatogenesis.

The protein resides in the nucleus envelope. The protein localises to the nucleus inner membrane. Major component of the nuclear lamina, a fibrous layer on the nucleoplasmic side of the inner nuclear membrane. Provides a framework for the nuclear envelope and probably also interacts with chromatin. Essential to maintain the shape and integrity of the nucleus, and for DNA replication. Involved in spatial organization of nuclear pore complexes. It is not a target for ced-3 during apoptosis, suggesting that lamin cleavage is not essential for apoptosis in C.elegans. In Caenorhabditis elegans, this protein is Lamin-1.